We begin with the raw amino-acid sequence, 257 residues long: Adenylate kinase (257 aa).

52 to 57 serves as a coordination point for ATP; that stretch reads GAGKGT. The segment at 72 to 101 is NMP; the sequence is ATGDMLRSQVAKKTELGKEAKKIMDQGGLV. Residues threonine 73, arginine 78, 99–101, 128–131, and glutamine 135 each bind AMP; these read GLV and GFPR. Residues 169-206 are LID; the sequence is GRLVHPASGRSYHKIFNPPKNDMKDDVTGEPLIQRSDD. Residues arginine 170 and 179–180 each bind ATP; that span reads SY. The AMP site is built by arginine 203 and arginine 214. ATP is bound at residue glutamine 242.

Belongs to the adenylate kinase family. AK2 subfamily. In terms of assembly, monomer.

The protein resides in the cytoplasm. The protein localises to the cytosol. Its subcellular location is the mitochondrion intermembrane space. It catalyses the reaction AMP + ATP = 2 ADP. Its function is as follows. Catalyzes the reversible transfer of the terminal phosphate group between ATP and AMP. Plays an important role in cellular energy homeostasis and in adenine nucleotide metabolism. Adenylate kinase activity is critical for regulation of the phosphate utilization and the AMP de novo biosynthesis pathways. This is Adenylate kinase (adk1) from Neosartorya fischeri (strain ATCC 1020 / DSM 3700 / CBS 544.65 / FGSC A1164 / JCM 1740 / NRRL 181 / WB 181) (Aspergillus fischerianus).